Consider the following 659-residue polypeptide: DNA ligase (659 aa).

NAD(+)-binding positions include 32–36 (DFEYD), 81–82 (SL), and glutamate 111. The active-site N6-AMP-lysine intermediate is lysine 113. NAD(+) contacts are provided by arginine 134, glutamate 168, lysine 280, and lysine 304. 4 residues coordinate Zn(2+): cysteine 398, cysteine 401, cysteine 416, and cysteine 421. The region spanning 585–655 (ETNSIYFQKR…KELNIPIINE (71 aa)) is the BRCT domain.

This sequence belongs to the NAD-dependent DNA ligase family. LigA subfamily. Mg(2+) serves as cofactor. Requires Mn(2+) as cofactor.

The catalysed reaction is NAD(+) + (deoxyribonucleotide)n-3'-hydroxyl + 5'-phospho-(deoxyribonucleotide)m = (deoxyribonucleotide)n+m + AMP + beta-nicotinamide D-nucleotide.. In terms of biological role, DNA ligase that catalyzes the formation of phosphodiester linkages between 5'-phosphoryl and 3'-hydroxyl groups in double-stranded DNA using NAD as a coenzyme and as the energy source for the reaction. It is essential for DNA replication and repair of damaged DNA. The chain is DNA ligase from Mycoplasma genitalium (strain ATCC 33530 / DSM 19775 / NCTC 10195 / G37) (Mycoplasmoides genitalium).